The primary structure comprises 446 residues: Indoleacetamide hydrolase (446 aa).

Residues lysine 71 and serine 146 each act as charge relay system in the active site. Catalysis depends on serine 170, which acts as the Acyl-ester intermediate.

Belongs to the amidase family.

The protein operates within plant hormone metabolism; auxin biosynthesis. Functionally, hydrolyzes indole-3-acetamide (IAM) into indole-3-acetic acid (IAA). This is Indoleacetamide hydrolase (iaaH) from Pseudomonas syringae pv. syringae.